A 286-amino-acid polypeptide reads, in one-letter code: 4-hydroxy-3-methylbut-2-enyl diphosphate reductase (286 aa).

Cys12 serves as a coordination point for [4Fe-4S] cluster. (2E)-4-hydroxy-3-methylbut-2-enyl diphosphate contacts are provided by His46 and His79. 2 residues coordinate dimethylallyl diphosphate: His46 and His79. Residues His46 and His79 each contribute to the isopentenyl diphosphate site. Residue Cys101 coordinates [4Fe-4S] cluster. His129 is a (2E)-4-hydroxy-3-methylbut-2-enyl diphosphate binding site. His129 contributes to the dimethylallyl diphosphate binding site. His129 contributes to the isopentenyl diphosphate binding site. The active-site Proton donor is Glu131. Thr169 lines the (2E)-4-hydroxy-3-methylbut-2-enyl diphosphate pocket. Residue Cys198 participates in [4Fe-4S] cluster binding. 3 residues coordinate (2E)-4-hydroxy-3-methylbut-2-enyl diphosphate: Ser226, Asn228, and Ser270. Residues Ser226, Asn228, and Ser270 each coordinate dimethylallyl diphosphate. Isopentenyl diphosphate contacts are provided by Ser226, Asn228, and Ser270.

Belongs to the IspH family. It depends on [4Fe-4S] cluster as a cofactor.

The enzyme catalyses isopentenyl diphosphate + 2 oxidized [2Fe-2S]-[ferredoxin] + H2O = (2E)-4-hydroxy-3-methylbut-2-enyl diphosphate + 2 reduced [2Fe-2S]-[ferredoxin] + 2 H(+). It carries out the reaction dimethylallyl diphosphate + 2 oxidized [2Fe-2S]-[ferredoxin] + H2O = (2E)-4-hydroxy-3-methylbut-2-enyl diphosphate + 2 reduced [2Fe-2S]-[ferredoxin] + 2 H(+). The protein operates within isoprenoid biosynthesis; dimethylallyl diphosphate biosynthesis; dimethylallyl diphosphate from (2E)-4-hydroxy-3-methylbutenyl diphosphate: step 1/1. Its pathway is isoprenoid biosynthesis; isopentenyl diphosphate biosynthesis via DXP pathway; isopentenyl diphosphate from 1-deoxy-D-xylulose 5-phosphate: step 6/6. Its function is as follows. Catalyzes the conversion of 1-hydroxy-2-methyl-2-(E)-butenyl 4-diphosphate (HMBPP) into a mixture of isopentenyl diphosphate (IPP) and dimethylallyl diphosphate (DMAPP). Acts in the terminal step of the DOXP/MEP pathway for isoprenoid precursor biosynthesis. This chain is 4-hydroxy-3-methylbut-2-enyl diphosphate reductase, found in Solidesulfovibrio magneticus (strain ATCC 700980 / DSM 13731 / RS-1) (Desulfovibrio magneticus).